Here is a 331-residue protein sequence, read N- to C-terminus: Barley B recombinant-like protein D (331 aa).

The stretch at 43-101 forms a coiled coil; the sequence is ALMNDRDNAIRERDHALAEKKAAIAERDMAFTQRDAAMAERNAAVVERDNALAALELAR. Residues 51-86 are alanine-zipper; the sequence is AIRERDHALAEKKAAIAERDMAFTQRDAAMAERNAA. Polar residues predominate over residues 104–122; sequence GLNMNNGNGFPQGSLSGSK. 2 disordered regions span residues 104 to 140 and 156 to 205; these read GLNMNNGNGFPQGSLSGSKNIHHHDQLSHAQSSPLQL and AYPI…VGMS.

Belongs to the BBR/BPC family. Homodimer. Heterodimer.

It localises to the nucleus. Functionally, transcriptional regulator that specifically binds to GA-rich elements (GAGA-repeats) present in regulatory sequences of genes involved in developmental processes. This chain is Barley B recombinant-like protein D, found in Oryza sativa subsp. japonica (Rice).